Reading from the N-terminus, the 256-residue chain is MAVGKNKRLSKGKKGIKKKVVDPFSRKDWYDIKAPSIFDVRNVGKTLVNRSQGLKNANDSLKGRIIEVSLGDLNKEEEQSFRKIKLRVDEVQGKNCLTNFHGMDFTSDKLRSLVRKWQTLIEAHVDVKTTDGYLLRLFAIGFTKRRPTQVRKTTYAQSSQVREIRKKMFEIMTREATNCDLKELVQKFVPEAIGREIEKASRSIYPLQNVYVRKAKILKAPKFDVSKLMELHGESTDETGTKIAKDFKEPEVLESV.

Alanine 2 carries the post-translational modification N-acetylalanine; partial.

Belongs to the eukaryotic ribosomal protein eS1 family. As to quaternary structure, component of the small ribosomal subunit. Mature ribosomes consist of a small (40S) and a large (60S) subunit. The 40S subunit contains about 33 different proteins and 1 molecule of RNA (18S). The 60S subunit contains about 49 different proteins and 3 molecules of RNA (25S, 5.8S and 5S).

Its subcellular location is the cytoplasm. The polypeptide is Small ribosomal subunit protein eS1 (Lentinula edodes (Shiitake mushroom)).